The sequence spans 725 residues: G-quartet DNA-binding protein TGP1 (725 aa).

The Nuclear localization signal motif lies at 241–258 (KKALTDVLQIHEKKERVH). Disordered stretches follow at residues 252 to 284 (EKKE…LQET) and 468 to 614 (EIHK…GKRG). The span at 256-277 (RVHKQQNKNKNPRNAHKNHNRQ) shows a compositional bias: basic residues. Residues 468–478 (EIHKIDRERKR) show a composition bias toward basic and acidic residues. Over residues 517 to 544 (NKYKNTSVQNNNNNKNQQRSQSQNQRPP) the composition is skewed to low complexity. The segment covering 545 to 564 (RNYDNRQGGENRNNRQRNEN) has biased composition (basic and acidic residues). Residues 565–593 (NRNNFNGNGHRVNNQNNQRNRNSSYPRNN) show a composition bias toward low complexity.

In terms of processing, the N-terminus is blocked.

The protein resides in the nucleus. Its function is as follows. Binds specifically to parallel G4-DNA, a four-stranded structure stabilized by tetrads of hydrogen-bonded guanines. This Tetrahymena thermophila protein is G-quartet DNA-binding protein TGP1 (TGP1).